The following is a 186-amino-acid chain: MGIKEKEIELETLKREIAQAEASLEQDFIKHMVDKTNEKVEDLFFSDKPEFYKFVFTEQNNYLREKLTDKVSKAMDLSDEIQRDKDAEEIEKDKQAFLNKHPEVDFNELLEFYEEELPKRIKTQIDKLEGAAFFEAILDYFNAINAREEEPKKESKEEYSSLPKEALGNGVSGVGYANNENIMTRY.

2 coiled-coil regions span residues glycine 2 to lysine 30 and leucine 63 to lysine 85.

In Helicobacter pylori (strain 35A), this protein is Coiled-coil domain-containing protein ORF13.